An 875-amino-acid polypeptide reads, in one-letter code: Leucine--tRNA ligase (875 aa).

The short motif at 43–53 is the 'HIGH' region element; the sequence is PYPSGRIHIGH. The 'KMSKS' region signature appears at 631–635; it reads KMSKS. Residue Lys-634 coordinates ATP.

It belongs to the class-I aminoacyl-tRNA synthetase family.

It localises to the cytoplasm. It catalyses the reaction tRNA(Leu) + L-leucine + ATP = L-leucyl-tRNA(Leu) + AMP + diphosphate. The chain is Leucine--tRNA ligase from Mesorhizobium japonicum (strain LMG 29417 / CECT 9101 / MAFF 303099) (Mesorhizobium loti (strain MAFF 303099)).